Reading from the N-terminus, the 130-residue chain is Sec-independent protein translocase protein TatB (130 aa).

A helical transmembrane segment spans residues 1 to 21 (MFDIGFWELVLIFVVGLVVLG). The disordered stretch occupies residues 85–130 (LKQAAQSVNRPYADVSAKNEATSSSSSDATHQTEATKTSAANTKSE). A compositionally biased stretch (polar residues) spans 112 to 130 (DATHQTEATKTSAANTKSE).

The protein belongs to the TatB family. The Tat system comprises two distinct complexes: a TatABC complex, containing multiple copies of TatA, TatB and TatC subunits, and a separate TatA complex, containing only TatA subunits. Substrates initially bind to the TatABC complex, which probably triggers association of the separate TatA complex to form the active translocon.

Its subcellular location is the cell inner membrane. Functionally, part of the twin-arginine translocation (Tat) system that transports large folded proteins containing a characteristic twin-arginine motif in their signal peptide across membranes. Together with TatC, TatB is part of a receptor directly interacting with Tat signal peptides. TatB may form an oligomeric binding site that transiently accommodates folded Tat precursor proteins before their translocation. The polypeptide is Sec-independent protein translocase protein TatB (Vibrio vulnificus (strain CMCP6)).